We begin with the raw amino-acid sequence, 67 residues long: Small ribosomal subunit protein eS17 (67 aa).

Belongs to the eukaryotic ribosomal protein eS17 family.

This is Small ribosomal subunit protein eS17 from Pyrococcus horikoshii (strain ATCC 700860 / DSM 12428 / JCM 9974 / NBRC 100139 / OT-3).